A 329-amino-acid polypeptide reads, in one-letter code: MAQSTLYSRVLGTGSYLPPDRVTNQQLTDRLAKEGIETSDEWIVARTGIHARHFAAPDVTTSDLALEASRRAIEAAGVDPQSIDLIIVATSTPDFVFPSTACLLQNKLGIKNGGAAFDVQAVCSGFAYAMATADSFIRSGQHRTALIVGAETFSRILDFKDRTTCVLFGDGAGAVILSASEEPGVLGSALHADGSYSNILCTPGNVNRGVIDGSVFLHMDGQAVFKLAVNVLEKVAIEALAKANLAPEQIDWLIPHQANIRIMTSTCRKLGLPQERMVVTVDQHGNTSAASIPLALDAAVRDGRIQRGQHVLIEGVGGGFTWGASVFRF.

Residues Cys-123 and His-256 contribute to the active site. The ACP-binding stretch occupies residues 257–261 (QANIR). The active site involves Asn-286.

Belongs to the thiolase-like superfamily. FabH family. As to quaternary structure, homodimer.

The protein resides in the cytoplasm. The catalysed reaction is malonyl-[ACP] + acetyl-CoA + H(+) = 3-oxobutanoyl-[ACP] + CO2 + CoA. It functions in the pathway lipid metabolism; fatty acid biosynthesis. Its function is as follows. Catalyzes the condensation reaction of fatty acid synthesis by the addition to an acyl acceptor of two carbons from malonyl-ACP. Catalyzes the first condensation reaction which initiates fatty acid synthesis and may therefore play a role in governing the total rate of fatty acid production. Possesses both acetoacetyl-ACP synthase and acetyl transacylase activities. Its substrate specificity determines the biosynthesis of branched-chain and/or straight-chain of fatty acids. This is Beta-ketoacyl-[acyl-carrier-protein] synthase III from Burkholderia orbicola (strain AU 1054).